Consider the following 295-residue polypeptide: Phosphatidylserine decarboxylase proenzyme (295 aa).

Residues Asp113, His169, and Ser256 each act as charge relay system; for autoendoproteolytic cleavage activity in the active site. The Schiff-base intermediate with substrate; via pyruvic acid; for decarboxylase activity role is filled by Ser256. Ser256 is modified (pyruvic acid (Ser); by autocatalysis).

This sequence belongs to the phosphatidylserine decarboxylase family. PSD-B subfamily. Prokaryotic type II sub-subfamily. In terms of assembly, heterodimer of a large membrane-associated beta subunit and a small pyruvoyl-containing alpha subunit. Pyruvate serves as cofactor. Is synthesized initially as an inactive proenzyme. Formation of the active enzyme involves a self-maturation process in which the active site pyruvoyl group is generated from an internal serine residue via an autocatalytic post-translational modification. Two non-identical subunits are generated from the proenzyme in this reaction, and the pyruvate is formed at the N-terminus of the alpha chain, which is derived from the carboxyl end of the proenzyme. The autoendoproteolytic cleavage occurs by a canonical serine protease mechanism, in which the side chain hydroxyl group of the serine supplies its oxygen atom to form the C-terminus of the beta chain, while the remainder of the serine residue undergoes an oxidative deamination to produce ammonia and the pyruvoyl prosthetic group on the alpha chain. During this reaction, the Ser that is part of the protease active site of the proenzyme becomes the pyruvoyl prosthetic group, which constitutes an essential element of the active site of the mature decarboxylase.

It localises to the cell membrane. The catalysed reaction is a 1,2-diacyl-sn-glycero-3-phospho-L-serine + H(+) = a 1,2-diacyl-sn-glycero-3-phosphoethanolamine + CO2. It functions in the pathway phospholipid metabolism; phosphatidylethanolamine biosynthesis; phosphatidylethanolamine from CDP-diacylglycerol: step 2/2. Catalyzes the formation of phosphatidylethanolamine (PtdEtn) from phosphatidylserine (PtdSer). The chain is Phosphatidylserine decarboxylase proenzyme from Clostridium botulinum (strain Kyoto / Type A2).